An 83-amino-acid polypeptide reads, in one-letter code: U20-theraphotoxin-Cg1a 2 (83 aa).

The N-terminal stretch at 1–21 (MQVSVLITLAVLGVMFVWTSA) is a signal peptide. The propeptide occupies 22 to 47 (AELEERGSDQPAWLKSLERIFQSEER). Cystine bridges form between C49-C63, C56-C68, and C62-C76.

It belongs to the neurotoxin 10 (Hwtx-1) family. 40 (Jztx-35) subfamily. As to expression, expressed by the venom gland.

It is found in the secreted. Functionally, probable ion channel inhibitor. This chain is U20-theraphotoxin-Cg1a 2, found in Chilobrachys guangxiensis (Chinese earth tiger tarantula).